The primary structure comprises 514 residues: Intracellular exo-alpha-L-arabinofuranosidase (514 aa).

Glutamate 47 and asparagine 194 together coordinate alpha-L-arabinofuranose. Glutamate 195 (proton donor/acceptor) is an active-site residue. The alpha-L-arabinofuranose site is built by tyrosine 261, glutamate 317, and glutamine 366. Glutamate 317 serves as the catalytic Nucleophile.

Belongs to the glycosyl hydrolase 51 family. In terms of assembly, homohexamer; trimer of dimers.

Its subcellular location is the cytoplasm. It carries out the reaction Hydrolysis of terminal non-reducing alpha-L-arabinofuranoside residues in alpha-L-arabinosides.. The protein operates within glycan metabolism; L-arabinan degradation. Functionally, involved in the degradation of arabinan and is a key enzyme in the complete degradation of the plant cell wall. Catalyzes the cleavage of terminal alpha-L-arabinofuranosyl residues in different hemicellulosic homopolysaccharides (branched and debranched arabinans) and heteropolysaccharides (arabinoxylans). The chain is Intracellular exo-alpha-L-arabinofuranosidase (asdII) from Bacteroides ovatus.